A 1146-amino-acid chain; its full sequence is Transcription-repair-coupling factor (1146 aa).

The 162-residue stretch at 617–778 folds into the Helicase ATP-binding domain; the sequence is DMCQPKAMDR…MNGIRDLSII (162 aa). ATP is bound at residue 630–637; it reads GDVGFGKT. A DEEH box motif is present at residues 731 to 734; that stretch reads DEEH. One can recognise a Helicase C-terminal domain in the interval 800-953; it reads VREAILREIL…GFILATHDLE (154 aa).

It in the N-terminal section; belongs to the UvrB family. The protein in the C-terminal section; belongs to the helicase family. RecG subfamily.

It is found in the cytoplasm. Couples transcription and DNA repair by recognizing RNA polymerase (RNAP) stalled at DNA lesions. Mediates ATP-dependent release of RNAP and its truncated transcript from the DNA, and recruitment of nucleotide excision repair machinery to the damaged site. This Haemophilus influenzae (strain ATCC 51907 / DSM 11121 / KW20 / Rd) protein is Transcription-repair-coupling factor.